The following is a 305-amino-acid chain: Transcriptional activator protein PfeR (305 aa).

The Response regulatory domain maps to 79 to 192 (RLLLVEDDPR…ELDARTDALL (114 aa)). The residue at position 128 (Asp128) is a 4-aspartylphosphate. Positions 200–301 (LPLAQRRDTR…VRGQGYLLVE (102 aa)) form a DNA-binding region, ompR/PhoB-type.

Phosphorylated by PfeS.

It is found in the cytoplasm. Its function is as follows. Member of the two-component regulatory system PfeR/PfeS. Activates expression of the ferric enterobactin receptor. This Pseudomonas aeruginosa (strain ATCC 15692 / DSM 22644 / CIP 104116 / JCM 14847 / LMG 12228 / 1C / PRS 101 / PAO1) protein is Transcriptional activator protein PfeR (pfeR).